The sequence spans 601 residues: NAD(+)--arginine ADP-ribosyltransferase Chelt (601 aa).

The signal sequence occupies residues 1–18 (MKTIISLIFIMFPLFVSA). Residues 26–43 (ADSRSPNEIKDLGGLYPR) and glutamate 130 each bind NAD(+). The active site involves glutamate 130. A disulfide bridge connects residues cysteine 205 and cysteine 220.

This sequence belongs to the enterotoxin A family.

The protein resides in the secreted. It catalyses the reaction L-arginyl-[protein] + NAD(+) = N(omega)-(ADP-D-ribosyl)-L-arginyl-[protein] + nicotinamide + H(+). In terms of biological role, a probable mono(ADP-ribosyl)transferase, it may ADP-ribosylate Arg in target protein(s). Upon expression in yeast cells causes cell death. In Vibrio cholerae, this protein is NAD(+)--arginine ADP-ribosyltransferase Chelt.